A 1000-amino-acid polypeptide reads, in one-letter code: UPF0182 protein SCO5204 (1000 aa).

The next 7 helical transmembrane spans lie at 26–48 (LLLTLGVLAVLAMAFTMFAGFWT), 70–92 (IGLFFVFGLLMALAVGFNIWLAH), 121–143 (WLLLGITALVGLIAGASASGQWR), 177–199 (FLLGFGFAAVIISVIAAALTHYL), 220–237 (LSVLLGVFVALKAVAYWL), 267–289 (LPAKTILFCIAVICALLFFATLW), and 296–318 (PVIGFGLMVLSAILIGGLYPALV). Disordered stretches follow at residues 884 to 908 (AETEQPPDEGDDTTEPPPTSTNPTV) and 943 to 1000 (EALQ…ADTG). Over residues 888–897 (QPPDEGDDTT) the composition is skewed to acidic residues. 2 stretches are compositionally biased toward basic and acidic residues: residues 943 to 953 (EALQRAEDAQA) and 963 to 984 (NGDDKNAGDKNSGDKAGSDKAG).

Belongs to the UPF0182 family.

The protein resides in the cell membrane. This is UPF0182 protein SCO5204 from Streptomyces coelicolor (strain ATCC BAA-471 / A3(2) / M145).